A 131-amino-acid polypeptide reads, in one-letter code: MAYSPSLNDIKSILNKYTSKDYELKCENRYDGKLELWLKGVFEEIVKTPGTRYVTHKQLDEKLKNFVTKTEFKEFQTVVMESFAVQNQNIDAQGEQIKELQVEQKAQGKTLQLILEALQGINKRLDNLESK.

It belongs to the UPF0134 family.

The protein is UPF0134 protein MPN_010 of Mycoplasma pneumoniae (strain ATCC 29342 / M129 / Subtype 1) (Mycoplasmoides pneumoniae).